We begin with the raw amino-acid sequence, 560 residues long: Membrane protein insertase YidC (560 aa).

6 consecutive transmembrane segments (helical) span residues 5–25, 334–354, 357–377, 431–451, 476–496, and 522–542; these read IINL…WQYF, AIDF…MNFF, YVGN…LLMF, LPIL…YVTI, LFGL…WPIL, and FMPL…LIYW.

Belongs to the OXA1/ALB3/YidC family. Type 1 subfamily. As to quaternary structure, interacts with the Sec translocase complex via SecD. Specifically interacts with transmembrane segments of nascent integral membrane proteins during membrane integration.

The protein localises to the cell inner membrane. Functionally, required for the insertion and/or proper folding and/or complex formation of integral membrane proteins into the membrane. Involved in integration of membrane proteins that insert both dependently and independently of the Sec translocase complex, as well as at least some lipoproteins. Aids folding of multispanning membrane proteins. The polypeptide is Membrane protein insertase YidC (Rickettsia massiliae (strain Mtu5)).